We begin with the raw amino-acid sequence, 274 residues long: MQSLHGNCLIAYARHKYILTMVNGEYRYFNGGDLVFADASQIRVDKCVENFVLVSRDTLSLFLPMLKEEALNLHAHKKVSSLLVHHCSRDIPVFQEVAQLSQNKNLRYAEMLRKRALIFALLSVFLEDDHFIPLLLNVLQPNMRTRVCTVINNNIAHEWTLARIASELLMSPSLLKKKLREEETSYSQLLTECRMQRALQLIVIHGFSIKRVAVSCGYHSVSYFIYVFRNYYGMTPTEYQERSAQGLPNRDSAASIVAQGNFYGTDCSAEGIRL.

An HTH araC/xylS-type domain is found at 145 to 242 (TRVCTVINNN…GMTPTEYQER (98 aa)). 2 consecutive DNA-binding regions (H-T-H motif) follow at residues 162 to 183 (ARIA…REEE) and 209 to 232 (IKRV…RNYY).

In terms of assembly, homodimer.

Its function is as follows. Positively regulates the expression of about fifteen genes involved in acid resistance such as gadA, gadB and gadC. Depending on the conditions (growth phase and medium), can repress gadW. The protein is HTH-type transcriptional regulator GadX (gadX) of Escherichia coli O157:H7.